A 628-amino-acid polypeptide reads, in one-letter code: Eukaryotic peptide chain release factor GTP-binding subunit ERF3B (628 aa).

Residues 1–10 (MDSGSSSSDS) show a composition bias toward low complexity. Disordered regions lie at residues 1–44 (MDSG…REPL), 71–124 (SFLR…LEGS), and 146–191 (LEES…KSKS). The region spanning 201–425 (KEHVNVVFIG…YLDNLPNFNR (225 aa)) is the tr-type G domain. The segment at 210–217 (GHVDAGKS) is G1. 213-218 (DAGKST) provides a ligand contact to GTP. The segment at 266–270 (GKTVE) is G2. The G3 stretch occupies residues 287 to 290 (DAPG). GTP-binding positions include 349 to 352 (NKMD) and 391 to 393 (SGL). The tract at residues 349–352 (NKMD) is G4. The interval 391–393 (SGL) is G5.

This sequence belongs to the TRAFAC class translation factor GTPase superfamily. Classic translation factor GTPase family. ERF3 subfamily. Component of the eRF1-eRF3-GTP ternary complex, composed of ETF1/ERF1 and ERF3 (GSPT1/ERF3A or GSPT2/ERF3B) and GTP. Component of the transient SURF (SMG1-UPF1-eRF1-eRF3) complex. Interacts with UPF1 and PABPC1.

The protein localises to the cytoplasm. The enzyme catalyses GTP + H2O = GDP + phosphate + H(+). In terms of biological role, GTPase component of the eRF1-eRF3-GTP ternary complex, a ternary complex that mediates translation termination in response to the termination codons UAA, UAG and UGA. GSPT2/ERF3B mediates ETF1/ERF1 delivery to stop codons: The eRF1-eRF3-GTP complex binds to a stop codon in the ribosomal A-site. GTP hydrolysis by GSPT2/ERF3B induces a conformational change that leads to its dissociation, permitting ETF1/ERF1 to accommodate fully in the A-site. Component of the transient SURF complex which recruits UPF1 to stalled ribosomes in the context of nonsense-mediated decay (NMD) of mRNAs containing premature stop codons. The protein is Eukaryotic peptide chain release factor GTP-binding subunit ERF3B (GSPT2) of Pongo abelii (Sumatran orangutan).